Reading from the N-terminus, the 337-residue chain is GTP 3',8-cyclase (337 aa).

The region spanning 17–243 (PFQRQYYYLR…HKSHTDGPAK (227 aa)) is the Radical SAM core domain. Arg-26 contributes to the GTP binding site. [4Fe-4S] cluster-binding residues include Cys-33 and Cys-37. Tyr-39 provides a ligand contact to S-adenosyl-L-methionine. [4Fe-4S] cluster is bound at residue Cys-40. Residue Arg-76 coordinates GTP. Gly-80 is a binding site for S-adenosyl-L-methionine. Thr-107 provides a ligand contact to GTP. Ser-131 contacts S-adenosyl-L-methionine. Residue Lys-168 coordinates GTP. An S-adenosyl-L-methionine-binding site is contributed by Met-202. Positions 265 and 268 each coordinate [4Fe-4S] cluster. A GTP-binding site is contributed by 270 to 272 (RLR). Cys-282 contributes to the [4Fe-4S] cluster binding site.

It belongs to the radical SAM superfamily. MoaA family. In terms of assembly, monomer and homodimer. The cofactor is [4Fe-4S] cluster.

It catalyses the reaction GTP + AH2 + S-adenosyl-L-methionine = (8S)-3',8-cyclo-7,8-dihydroguanosine 5'-triphosphate + 5'-deoxyadenosine + L-methionine + A + H(+). Its pathway is cofactor biosynthesis; molybdopterin biosynthesis. Functionally, catalyzes the cyclization of GTP to (8S)-3',8-cyclo-7,8-dihydroguanosine 5'-triphosphate. This is GTP 3',8-cyclase from Haemophilus influenzae (strain 86-028NP).